A 78-amino-acid chain; its full sequence is Omega-conotoxin-like Ac6.5 (78 aa).

The first 22 residues, 1-22, serve as a signal peptide directing secretion; the sequence is MKLTCVVIVAVLLLTACQLLTA. A propeptide spanning residues 23 to 42 is cleaved from the precursor; the sequence is DDSRGTQKHRSLRSTTKVSK. 3 disulfide bridges follow: Cys46–Cys62, Cys53–Cys65, and Cys61–Cys72. 2 positions are modified to 4-hydroxyproline: Pro55 and Pro67.

Belongs to the conotoxin O1 superfamily. Expressed by the venom duct.

The protein localises to the secreted. Its function is as follows. Omega-conotoxins act at presynaptic membranes, they bind and block voltage-gated calcium channels (Cav). The protein is Omega-conotoxin-like Ac6.5 of Conus achatinus (Little frog cone).